The following is a 236-amino-acid chain: Carbonyl reductase family member 4 (236 aa).

Residues Ser11–Ile14, Arg34–Asp35, Asp55, and Ser82–Gly84 contribute to the NADP(+) site. Ser134 contributes to the substrate binding site. Residues Tyr147, Lys151, and Ile180–Thr182 each bind NADP(+). Tyr147 acts as the Proton acceptor in catalysis.

This sequence belongs to the short-chain dehydrogenases/reductases (SDR) family. Homotetramer (in vitro). Heterotetramer with HSD17B8; contains two molecules each of HSD17B8 and CBR4.

It localises to the mitochondrion matrix. Its pathway is lipid metabolism; fatty acid biosynthesis. Functionally, the heterotetramer with HSD17B8 has NADH-dependent 3-ketoacyl-acyl carrier protein reductase activity, and thereby plays a role in mitochondrial fatty acid biosynthesis. Within the heterotetramer, HSD17B8 binds NADH; CBR4 binds NADPD. The homotetramer has NADPH-dependent quinone reductase activity. Both homotetramer and the heterotetramer have broad in vitro substrate specificity and can reduce 9,10-phenanthrenequinone, 1,4-benzoquinone and various other o-quinones and p-quinones. The chain is Carbonyl reductase family member 4 (cbr4) from Xenopus tropicalis (Western clawed frog).